Reading from the N-terminus, the 264-residue chain is Acyl-[acyl-carrier-protein]--UDP-N-acetylglucosamine O-acyltransferase (264 aa).

This sequence belongs to the transferase hexapeptide repeat family. LpxA subfamily. As to quaternary structure, homotrimer.

It localises to the cytoplasm. The enzyme catalyses a (3R)-hydroxyacyl-[ACP] + UDP-N-acetyl-alpha-D-glucosamine = a UDP-3-O-[(3R)-3-hydroxyacyl]-N-acetyl-alpha-D-glucosamine + holo-[ACP]. It functions in the pathway glycolipid biosynthesis; lipid IV(A) biosynthesis; lipid IV(A) from (3R)-3-hydroxytetradecanoyl-[acyl-carrier-protein] and UDP-N-acetyl-alpha-D-glucosamine: step 1/6. Involved in the biosynthesis of lipid A, a phosphorylated glycolipid that anchors the lipopolysaccharide to the outer membrane of the cell. The sequence is that of Acyl-[acyl-carrier-protein]--UDP-N-acetylglucosamine O-acyltransferase from Rickettsia felis (strain ATCC VR-1525 / URRWXCal2) (Rickettsia azadi).